Consider the following 137-residue polypeptide: Small ribosomal subunit protein eS19 (137 aa).

It belongs to the eukaryotic ribosomal protein eS19 family. As to quaternary structure, component of the small ribosomal subunit.

It localises to the cytoplasm. This Encephalitozoon cuniculi (strain GB-M1) (Microsporidian parasite) protein is Small ribosomal subunit protein eS19 (RPS19).